The sequence spans 449 residues: Tubulin beta chain (449 aa).

GTP is bound by residues Q11, E71, S140, G144, T145, G146, N206, and N228. A Mg(2+)-binding site is contributed by E71.

This sequence belongs to the tubulin family. As to quaternary structure, dimer of alpha and beta chains. A typical microtubule is a hollow water-filled tube with an outer diameter of 25 nm and an inner diameter of 15 nM. Alpha-beta heterodimers associate head-to-tail to form protofilaments running lengthwise along the microtubule wall with the beta-tubulin subunit facing the microtubule plus end conferring a structural polarity. Microtubules usually have 13 protofilaments but different protofilament numbers can be found in some organisms and specialized cells. Mg(2+) serves as cofactor.

The protein resides in the cytoplasm. It is found in the cytoskeleton. Its function is as follows. Tubulin is the major constituent of microtubules, a cylinder consisting of laterally associated linear protofilaments composed of alpha- and beta-tubulin heterodimers. Microtubules grow by the addition of GTP-tubulin dimers to the microtubule end, where a stabilizing cap forms. Below the cap, tubulin dimers are in GDP-bound state, owing to GTPase activity of alpha-tubulin. The sequence is that of Tubulin beta chain (TUBB) from Cicer arietinum (Chickpea).